The sequence spans 373 residues: Quinolinate synthase (373 aa).

Iminosuccinate is bound by residues histidine 46 and serine 63. Position 109 (cysteine 109) interacts with [4Fe-4S] cluster. Iminosuccinate contacts are provided by residues 142-144 (YMN) and serine 163. Residue cysteine 232 coordinates [4Fe-4S] cluster. Iminosuccinate is bound by residues 258-260 (HPE) and threonine 275. Cysteine 324 contributes to the [4Fe-4S] cluster binding site.

Belongs to the quinolinate synthase family. Type 3 subfamily. It depends on [4Fe-4S] cluster as a cofactor.

It is found in the cytoplasm. The catalysed reaction is iminosuccinate + dihydroxyacetone phosphate = quinolinate + phosphate + 2 H2O + H(+). It participates in cofactor biosynthesis; NAD(+) biosynthesis; quinolinate from iminoaspartate: step 1/1. Its function is as follows. Catalyzes the condensation of iminoaspartate with dihydroxyacetone phosphate to form quinolinate. In Acidobacterium capsulatum (strain ATCC 51196 / DSM 11244 / BCRC 80197 / JCM 7670 / NBRC 15755 / NCIMB 13165 / 161), this protein is Quinolinate synthase.